We begin with the raw amino-acid sequence, 2159 residues long: ATP-binding cassette sub-family A member 7 (2159 aa).

The chain crosses the membrane as a helical span at residues 22–42 (PIQLLVELLWPLFLFFILVAV). Topologically, residues 43–546 (RHSHPPLEHH…DVFLRVLSRS (504 aa)) are extracellular. Cysteine 75 and cysteine 222 are disulfide-bonded. A glycan (N-linked (GlcNAc...) asparagine) is linked at asparagine 309. 6 consecutive transmembrane segments (helical) span residues 547-567 (LPLF…KAVV), 590-610 (LGWF…LVLV), 623-643 (VVIF…SFLL), 652-672 (LAAA…VLCV), 678-698 (LHLG…GFGC), and 732-752 (AFLL…EAVC). The ABC transporter 1 domain occupies 804 to 1035 (VSIRGLKKHF…LGCGYYLTLV (232 aa)). An ATP-binding site is contributed by 838 to 845 (GHNGAGKT). The chain crosses the membrane as a helical span at residues 846 to 866 (TTLSILSGLFPPSSGSASILG). 2 disordered regions span residues 1042–1088 (VTHD…GAVP) and 1172–1192 (GGDS…PTGP). Over residues 1044 to 1061 (HDAKGDSEDPRREKKSDG) the composition is skewed to basic and acidic residues. Residues 1062 to 1081 (NGRTSDTAFTRGTSDKSNQA) are compositionally biased toward polar residues. A helical transmembrane segment spans residues 1246-1266 (VVLPALFVGLALFFSLIVPPF). Residues 1267 to 1551 (GQYPPLQLSP…TLIASSVDVL (285 aa)) lie on the Extracellular side of the membrane. The cysteines at positions 1359 and 1373 are disulfide-linked. 5 consecutive transmembrane segments (helical) span residues 1552–1572 (VSIC…LVLI), 1598–1618 (FLWD…IFLA), 1635–1655 (LLLL…SFFF), 1663–1683 (VVLT…TFVL), and 1743–1763 (IIGK…LITL). In terms of domain architecture, ABC transporter 2 spans 1807-2039 (LVLRDLTKVY…FGAGHTLTLR (233 aa)). 1841–1848 (GVNGAGKT) contributes to the ATP binding site. The segment at 2118–2159 (QGEEEESSRQEAEEEEVSKPGRQHPKRVSRFLEDPSSVETMI) is disordered. A compositionally biased stretch (acidic residues) spans 2119–2133 (GEEEESSRQEAEEEE).

Belongs to the ABC transporter superfamily. ABCA family. N-glycosylated. As to expression, widely expressed with higher expression in brain, lung, adrenal gland, spleen and hematopoietic tissues (at protein level). In the brain, expressed in cortex, cerebellum, hippocampus, olfactory bulb, neurons, astrocytes and microglia (at protein level). Also expressed in adipocytes and macrophages (at protein level). Expressed in thymocytes (at protein level). Highly expressed in spleen and hematopoietic tissues. Expressed in brain, lung, macrophages, microglia, oligodendrocytes and neurons.

The protein localises to the cell membrane. It localises to the golgi apparatus membrane. It is found in the early endosome membrane. Its subcellular location is the cytoplasm. The protein resides in the cell projection. The protein localises to the ruffle membrane. It localises to the phagocytic cup. Probable ATP-binding cassette (ABC) transporter that plays a role in lipid homeostasis and macrophage-mediated phagocytosis. Binds APOA1 and may function in apolipoprotein-mediated phospholipid efflux from cells. May also mediate cholesterol efflux. May regulate cellular ceramide homeostasis during keratinocyte differentiation. Involved in lipid raft organization and CD1D localization on thymocytes and antigen-presenting cells, which plays an important role in natural killer T-cell development and activation. Plays a role in phagocytosis of apoptotic cells by macrophages. Macrophage phagocytosis is stimulated by APOA1 or APOA2, probably by stabilization of ABCA7. Also involved in phagocytic clearance of amyloid-beta by microglia cells and macrophages. Further limits amyloid-beta production by playing a role in the regulation of amyloid-beta A4 precursor protein (APP) endocytosis and/or processing. The polypeptide is ATP-binding cassette sub-family A member 7 (Abca7) (Mus musculus (Mouse)).